Reading from the N-terminus, the 359-residue chain is Acyl-CoA Delta-9 desaturase (359 aa).

A run of 2 helical transmembrane segments spans residues 51 to 71 and 74 to 94; these read VILFIYLHLAALYGAYLAFTS and IATTIFAIILYQVSGVGITGG. Fe cation-binding residues include histidine 96, histidine 101, histidine 133, histidine 136, and histidine 137. Positions 96-101 match the Histidine box-1 motif; sequence HRLWAH. The Histidine box-2 signature appears at 133–137; sequence HRVHH. Transmembrane regions (helical) follow at residues 194-214 and 222-244; these read YLILMPIVCFLIPTTIPVYMW and WFVATLFRYTFTLNMTWLVNSAA. Fe cation-binding residues include histidine 245, histidine 274, histidine 277, and histidine 278. A Histidine box-3 motif is present at residues 274-278; the sequence is HNYHH.

Belongs to the fatty acid desaturase type 1 family. Fe(2+) is required as a cofactor.

The protein resides in the membrane. The enzyme catalyses octadecanoyl-CoA + 2 Fe(II)-[cytochrome b5] + O2 + 2 H(+) = (9Z)-octadecenoyl-CoA + 2 Fe(III)-[cytochrome b5] + 2 H2O. The catalysed reaction is hexadecanoyl-CoA + 2 Fe(II)-[cytochrome b5] + O2 + 2 H(+) = (9Z)-hexadecenoyl-CoA + 2 Fe(III)-[cytochrome b5] + 2 H2O. In terms of biological role, catalyzes the formation of a Delta9 double bond, acting on saturated fatty acyl substrates like palmitoyl-CoA (hexadecanoyl-CoA) and stearoyl-CoA (octadecanoyl-CoA) with higher desaturation activity on octadecanoyl-CoA than hexadecanoyl-CoA. This is Acyl-CoA Delta-9 desaturase from Acheta domesticus (House cricket).